The primary structure comprises 704 residues: Ribosomal RNA large subunit methyltransferase K/L (704 aa).

The THUMP domain maps to 43-154; the sequence is TMYQSLLWSR…KEKASLSLDL (112 aa).

The protein belongs to the methyltransferase superfamily. RlmKL family.

The protein resides in the cytoplasm. The enzyme catalyses guanosine(2445) in 23S rRNA + S-adenosyl-L-methionine = N(2)-methylguanosine(2445) in 23S rRNA + S-adenosyl-L-homocysteine + H(+). It catalyses the reaction guanosine(2069) in 23S rRNA + S-adenosyl-L-methionine = N(2)-methylguanosine(2069) in 23S rRNA + S-adenosyl-L-homocysteine + H(+). Functionally, specifically methylates the guanine in position 2445 (m2G2445) and the guanine in position 2069 (m7G2069) of 23S rRNA. This chain is Ribosomal RNA large subunit methyltransferase K/L, found in Proteus mirabilis (strain HI4320).